The primary structure comprises 201 residues: LexA repressor (201 aa).

The segment at residues 28–48 (RAEIANQLGFRSANAAEEHLK) is a DNA-binding region (H-T-H motif). Active-site for autocatalytic cleavage activity residues include Ser118 and Lys155.

This sequence belongs to the peptidase S24 family. Homodimer.

The enzyme catalyses Hydrolysis of Ala-|-Gly bond in repressor LexA.. Represses a number of genes involved in the response to DNA damage (SOS response), including recA and lexA. In the presence of single-stranded DNA, RecA interacts with LexA causing an autocatalytic cleavage which disrupts the DNA-binding part of LexA, leading to derepression of the SOS regulon and eventually DNA repair. This is LexA repressor from Saccharophagus degradans (strain 2-40 / ATCC 43961 / DSM 17024).